Consider the following 120-residue polypeptide: uncharacterized protein (120 aa).

The protein belongs to the asp23 family.

This is an uncharacterized protein from Bacillus subtilis (strain 168).